A 209-amino-acid chain; its full sequence is Mei4-dependent protein 1 (209 aa).

The N-terminal stretch at 1–22 (MLHATQLCYLLLFCFLPISISS) is a signal peptide.

The protein resides in the secreted. The protein is Mei4-dependent protein 1 (mde1) of Schizosaccharomyces pombe (strain 972 / ATCC 24843) (Fission yeast).